The chain runs to 518 residues: Serine incorporator 4 (518 aa).

10 helical membrane-spanning segments follow: residues 59–79 (CSRL…CLLL), 122–142 (VCAG…HLHS), 153–173 (SFWL…FCIP), 184–204 (IGIC…TAFA), 222–242 (FLAV…GAVL), 259–279 (LLSL…APCI), 286–306 (SGLL…FSAL), 338–357 (ISLA…FACN), 427–447 (AFHF…TNWF), and 470–490 (VASC…PLCW).

It belongs to the TDE1 family.

The protein resides in the membrane. In terms of biological role, incorporates a polar amino acid serine into membranes and facilitates the synthesis of two serine-derived lipids, phosphatidylserine and sphingolipids. This chain is Serine incorporator 4 (SERINC4), found in Homo sapiens (Human).